Consider the following 1197-residue polypeptide: PAN2-PAN3 deadenylation complex catalytic subunit PAN2 (1197 aa).

4 WD repeats span residues 153–193, 195–231, 244–280, and 328–367; these read DEAE…QKYT, EVPG…VEHE, VHGN…ATTP, and TVGP…TFNT. A linker region spans residues 368–485; sequence YSRETDFALP…IGREEEPHLY (118 aa). The USP domain occupies 486–919; the sequence is MVAKKYRKVT…VPAILYYARR (434 aa). Positions 970–1142 constitute an Exonuclease domain; that stretch reads VGLDAEFVTL…EDARTALQLY (173 aa). D973, E975, D1082, and D1134 together coordinate a divalent metal cation. The segment at 1176–1197 is disordered; that stretch reads VPEPDSQSSPKHGAVFPPVLAL.

It belongs to the peptidase C19 family. PAN2 subfamily. As to quaternary structure, forms a heterotrimer with an asymmetric homodimer of the regulatory subunit PAN3 to form the poly(A)-nuclease (PAN) deadenylation complex. Requires a divalent metal cation as cofactor.

Its subcellular location is the cytoplasm. The protein localises to the P-body. It localises to the nucleus. The catalysed reaction is Exonucleolytic cleavage of poly(A) to 5'-AMP.. Positively regulated by the regulatory subunit PAN3. Its function is as follows. Catalytic subunit of the poly(A)-nuclease (PAN) deadenylation complex, one of two cytoplasmic mRNA deadenylases involved in general and miRNA-mediated mRNA turnover. PAN specifically shortens poly(A) tails of RNA and the activity is stimulated by poly(A)-binding protein (PABP). PAN deadenylation is followed by rapid degradation of the shortened mRNA tails by the CCR4-NOT complex. Deadenylated mRNAs are then degraded by two alternative mechanisms, namely exosome-mediated 3'-5' exonucleolytic degradation, or deadenylation-dependent mRNA decaping and subsequent 5'-3' exonucleolytic degradation by XRN1. The sequence is that of PAN2-PAN3 deadenylation complex catalytic subunit PAN2 from Gallus gallus (Chicken).